Consider the following 209-residue polypeptide: Urease accessory protein UreG (209 aa).

18–25 (GPVGSGKT) lines the GTP pocket.

It belongs to the SIMIBI class G3E GTPase family. UreG subfamily. As to quaternary structure, homodimer. UreD, UreF and UreG form a complex that acts as a GTP-hydrolysis-dependent molecular chaperone, activating the urease apoprotein by helping to assemble the nickel containing metallocenter of UreC. The UreE protein probably delivers the nickel.

It is found in the cytoplasm. Functionally, facilitates the functional incorporation of the urease nickel metallocenter. This process requires GTP hydrolysis, probably effectuated by UreG. The sequence is that of Urease accessory protein UreG from Cupriavidus necator (strain ATCC 17699 / DSM 428 / KCTC 22496 / NCIMB 10442 / H16 / Stanier 337) (Ralstonia eutropha).